A 96-amino-acid chain; its full sequence is Mitochondrial import inner membrane translocase subunit Tim13-A (96 aa).

The Twin CX3C motif signature appears at 47 to 70; sequence CFRKCIGKPGGSLDNSEQKCIAMC. Intrachain disulfides connect C47-C70 and C51-C66.

This sequence belongs to the small Tim family. Heterohexamer; composed of 3 copies of TIMM8 (TIMM8A or TIMM8B) and 3 copies of TIMM13, named soluble 70 kDa complex. Associates with the TIM22 complex, whose core is composed of TIMM22.

The protein resides in the mitochondrion inner membrane. In terms of biological role, mitochondrial intermembrane chaperone that participates in the import and insertion of some multi-pass transmembrane proteins into the mitochondrial inner membrane. Also required for the transfer of beta-barrel precursors from the TOM complex to the sorting and assembly machinery (SAM complex) of the outer membrane. Acts as a chaperone-like protein that protects the hydrophobic precursors from aggregation and guide them through the mitochondrial intermembrane space. The TIMM8-TIMM13 complex mediates the import of some proteins while the predominant TIMM9-TIMM10 70 kDa complex mediates the import of much more proteins. The chain is Mitochondrial import inner membrane translocase subunit Tim13-A (timm13-a) from Xenopus laevis (African clawed frog).